The chain runs to 314 residues: Bifunctional riboflavin kinase/FMN adenylyltransferase (314 aa).

This sequence belongs to the RibF family.

The enzyme catalyses riboflavin + ATP = FMN + ADP + H(+). The catalysed reaction is FMN + ATP + H(+) = FAD + diphosphate. It functions in the pathway cofactor biosynthesis; FAD biosynthesis; FAD from FMN: step 1/1. Its pathway is cofactor biosynthesis; FMN biosynthesis; FMN from riboflavin (ATP route): step 1/1. In terms of biological role, catalyzes the phosphorylation of riboflavin to FMN followed by the adenylation of FMN to FAD. Can also catalyze the phosphorylation of the toxic riboflavin analogs 8-demethyl-8-aminoriboflavin (AF) to 8-demethyl-8-aminoriboflavin mononucleotide (AFMN) and roseoflavin (RoF) to roseoflavin mononucleotide (RoFMN), and the adenylation of AFMN to 8-demethyl-8-aminoriboflavin adenine dinucleotide (AFAD). The protein is Bifunctional riboflavin kinase/FMN adenylyltransferase of Listeria monocytogenes serovar 1/2a (strain ATCC BAA-679 / EGD-e).